Consider the following 486-residue polypeptide: UDP-N-acetylmuramate--L-alanine ligase (486 aa).

Position 129–135 (Gly129–Thr135) interacts with ATP.

Belongs to the MurCDEF family.

The protein localises to the cytoplasm. The enzyme catalyses UDP-N-acetyl-alpha-D-muramate + L-alanine + ATP = UDP-N-acetyl-alpha-D-muramoyl-L-alanine + ADP + phosphate + H(+). Its pathway is cell wall biogenesis; peptidoglycan biosynthesis. Cell wall formation. The sequence is that of UDP-N-acetylmuramate--L-alanine ligase from Vibrio vulnificus (strain YJ016).